The primary structure comprises 147 residues: Putative pre-16S rRNA nuclease (147 aa).

Belongs to the YqgF nuclease family.

The protein localises to the cytoplasm. Its function is as follows. Could be a nuclease involved in processing of the 5'-end of pre-16S rRNA. This chain is Putative pre-16S rRNA nuclease, found in Acinetobacter baylyi (strain ATCC 33305 / BD413 / ADP1).